The primary structure comprises 115 residues: MWRENKGFSTIETMSALSLWLFVLLTVVPLWDKLMADEKMAESREIGYQMMNESISKYVMSGEGAASKTITKNNHIYAMKWEEEGEYQNVCIKAAAYKEKSFCLSILQTEWLHAS.

The propeptide at 1 to 7 (MWRENKG) is leader sequence. An N-methylphenylalanine modification is found at Phe-8. The helical transmembrane segment at 13–31 (TMSALSLWLFVLLTVVPLW) threads the bilayer.

Post-translationally, processing of ComGE in competent cells requires ComC.

It localises to the cell membrane. The protein localises to the cell surface. In terms of biological role, required for transformation and DNA binding. This chain is ComG operon protein 5 (comGE), found in Bacillus subtilis (strain 168).